Here is a 667-residue protein sequence, read N- to C-terminus: Protein adenylyltransferase SelO, mitochondrial (667 aa).

A mitochondrion-targeting transit peptide spans 1–6; that stretch reads MASVRA. Residues glycine 154, glycine 156, lysine 177, aspartate 189, glycine 190, arginine 247, and arginine 254 each contribute to the ATP site. The Proton acceptor role is filled by aspartate 341. Positions 342 and 351 each coordinate Mg(2+). Aspartate 351 provides a ligand contact to ATP. The disordered stretch occupies residues 628-652; it reads YHSEEEATGPEAVARSTEEQSSYSN. Phosphothreonine is present on threonine 635. At serine 651 the chain carries Phosphoserine. Position 665 (selenocysteine 665) is a non-standard amino acid, selenocysteine.

This sequence belongs to the SELO family. The cofactor is Mg(2+).

It localises to the mitochondrion. It carries out the reaction L-tyrosyl-[protein] + ATP = O-(5'-adenylyl)-L-tyrosyl-[protein] + diphosphate. The catalysed reaction is L-threonyl-[protein] + ATP = 3-O-(5'-adenylyl)-L-threonyl-[protein] + diphosphate. It catalyses the reaction L-seryl-[protein] + ATP = 3-O-(5'-adenylyl)-L-seryl-[protein] + diphosphate. In terms of biological role, catalyzes the transfer of adenosine 5'-monophosphate (AMP) to Ser, Thr and Tyr residues of target proteins (AMPylation). May be a redox-active mitochondrial selenoprotein which interacts with a redox target protein. The chain is Protein adenylyltransferase SelO, mitochondrial from Mus musculus (Mouse).